A 213-amino-acid chain; its full sequence is Holliday junction resolvase RecU (213 aa).

Positions 98, 100, 113, and 132 each coordinate Mg(2+).

Belongs to the RecU family. Mg(2+) is required as a cofactor.

The protein localises to the cytoplasm. The catalysed reaction is Endonucleolytic cleavage at a junction such as a reciprocal single-stranded crossover between two homologous DNA duplexes (Holliday junction).. In terms of biological role, endonuclease that resolves Holliday junction intermediates in genetic recombination. Cleaves mobile four-strand junctions by introducing symmetrical nicks in paired strands. Promotes annealing of linear ssDNA with homologous dsDNA. Required for DNA repair, homologous recombination and chromosome segregation. The sequence is that of Holliday junction resolvase RecU from Ligilactobacillus salivarius (strain UCC118) (Lactobacillus salivarius).